A 369-amino-acid chain; its full sequence is Queuine tRNA-ribosyltransferase (369 aa).

The Proton acceptor role is filled by aspartate 89. Residues 89-93 (DSGGF), aspartate 143, glutamine 187, and glycine 214 each bind substrate. The segment at 245 to 251 (GVGTPED) is RNA binding. The Nucleophile role is filled by aspartate 264. Residues 269–273 (TRNAR) form an RNA binding; important for wobble base 34 recognition region. The Zn(2+) site is built by cysteine 302, cysteine 304, cysteine 307, and histidine 333.

Belongs to the queuine tRNA-ribosyltransferase family. As to quaternary structure, homodimer. Within each dimer, one monomer is responsible for RNA recognition and catalysis, while the other monomer binds to the replacement base PreQ1. The cofactor is Zn(2+).

It catalyses the reaction 7-aminomethyl-7-carbaguanine + guanosine(34) in tRNA = 7-aminomethyl-7-carbaguanosine(34) in tRNA + guanine. It functions in the pathway tRNA modification; tRNA-queuosine biosynthesis. Catalyzes the base-exchange of a guanine (G) residue with the queuine precursor 7-aminomethyl-7-deazaguanine (PreQ1) at position 34 (anticodon wobble position) in tRNAs with GU(N) anticodons (tRNA-Asp, -Asn, -His and -Tyr). Catalysis occurs through a double-displacement mechanism. The nucleophile active site attacks the C1' of nucleotide 34 to detach the guanine base from the RNA, forming a covalent enzyme-RNA intermediate. The proton acceptor active site deprotonates the incoming PreQ1, allowing a nucleophilic attack on the C1' of the ribose to form the product. After dissociation, two additional enzymatic reactions on the tRNA convert PreQ1 to queuine (Q), resulting in the hypermodified nucleoside queuosine (7-(((4,5-cis-dihydroxy-2-cyclopenten-1-yl)amino)methyl)-7-deazaguanosine). The protein is Queuine tRNA-ribosyltransferase of Dechloromonas aromatica (strain RCB).